Reading from the N-terminus, the 407-residue chain is Cell division control protein 12 (407 aa).

The residue at position 2 (Ser-2) is an N-acetylserine. Residues 31–314 enclose the Septin-type G domain; the sequence is EGGTFTVMLC…ETYRRLRLEG (284 aa). Residues 41–48 are G1 motif; sequence GESGLGKT. Residues 41-48, Thr-75, Gly-101, 180-188, Gly-247, and Arg-263 each bind GTP; these read GESGLGKT and KADTLTAQE. The segment at 98 to 101 is G3 motif; it reads DTPG. The tract at residues 179–182 is G4 motif; sequence AKAD. Residues 344 to 406 adopt a coiled-coil conformation; that stretch reads EEENALKKYF…KSLQVKKSHL (63 aa).

The protein belongs to the TRAFAC class TrmE-Era-EngA-EngB-Septin-like GTPase superfamily. Septin GTPase family. As to quaternary structure, component of the septin complex which consists of CDC3, CDC10, CDC11, CDC12 and probably SHS1 and rearranges to a cortical collar of highly ordered filaments at the mother-bud-neck. A complex formed by CDC3, CDC10, CDC11 and CDC12 is capable of forming long filaments in vitro and the components seem to be present in a 2:2:2:2 arrangement in vivo. The filaments are proposed to be formed by the end-to-end polymerization of CDC3-CDC12-CDC11 complexes with CDC10 serving as a bridge to bundle the polymers into paired filaments. Component of the GIN4 complex composed of at least BNI5, CDC3, CDC10, CDC11, CDC12, GIN4, NAP1 and SHS1. Self-associates. Interacts with SYP1.

Its subcellular location is the membrane. The protein resides in the bud neck. Septins are GTPases involved in cytokinesis that assemble early in the cell cycle as a patch at the incipient bud site and form a ring approximate 15 minutes before bud emergence, which transforms into an hour-glass shaped collar of cortical filaments that spans both sides of the mother-bud neck. This collar persists until just before cytokinesis, when it splits into two rings that occupy opposite sides of the neck. The septins at the bud neck serve as a structural scaffold that recruits different components involved in diverse processes at specific stages during the cell cycle. Many proteins bind asymmetrically to the septin collar. The septin assembly is regulated by protein kinases GIN4 and/or CLA4. May act by recruiting MYO1 and HOF1, a protein involved in septation, to the site of cleavage. Septins are also involved in cell morphogenesis, bud site selection, chitin deposition, cell cycle regulation, cell compartmentalization and spore wall formation. The sequence is that of Cell division control protein 12 (CDC12) from Saccharomyces cerevisiae (strain ATCC 204508 / S288c) (Baker's yeast).